An 83-amino-acid chain; its full sequence is Small ribosomal subunit protein uS17 (83 aa).

The protein belongs to the universal ribosomal protein uS17 family. In terms of assembly, part of the 30S ribosomal subunit.

One of the primary rRNA binding proteins, it binds specifically to the 5'-end of 16S ribosomal RNA. The sequence is that of Small ribosomal subunit protein uS17 from Acaryochloris marina (strain MBIC 11017).